The chain runs to 134 residues: Transcription antitermination protein NusB (134 aa).

This sequence belongs to the NusB family.

Its function is as follows. Involved in transcription antitermination. Required for transcription of ribosomal RNA (rRNA) genes. Binds specifically to the boxA antiterminator sequence of the ribosomal RNA (rrn) operons. The sequence is that of Transcription antitermination protein NusB from Shewanella sp. (strain MR-4).